Here is an 87-residue protein sequence, read N- to C-terminus: Glutaredoxin (87 aa).

In terms of domain architecture, Glutaredoxin spans M1–A87. A disulfide bond links C11 and C14.

The protein belongs to the glutaredoxin family. As to quaternary structure, monomer.

The protein resides in the cytoplasm. In terms of biological role, has a glutathione-disulfide oxidoreductase activity in the presence of NADPH and glutathione reductase. Reduces low molecular weight disulfides and proteins. The polypeptide is Glutaredoxin (grxA) (Haemophilus influenzae (strain ATCC 51907 / DSM 11121 / KW20 / Rd)).